The chain runs to 200 residues: Recombination protein RecR (200 aa).

Residues 59–74 (CDICGNVCETSPCPVC) form a C4-type zinc finger. In terms of domain architecture, Toprim spans 82–177 (SVICVVEEPK…KVTRLASGLP (96 aa)).

Belongs to the RecR family.

In terms of biological role, may play a role in DNA repair. It seems to be involved in an RecBC-independent recombinational process of DNA repair. It may act with RecF and RecO. This Bifidobacterium adolescentis (strain ATCC 15703 / DSM 20083 / NCTC 11814 / E194a) protein is Recombination protein RecR.